A 194-amino-acid chain; its full sequence is Peptidyl-tRNA hydrolase (194 aa).

Tyr-16 provides a ligand contact to tRNA. The active-site Proton acceptor is His-21. The tRNA site is built by Phe-67, Asn-69, and Asn-115.

Belongs to the PTH family. As to quaternary structure, monomer.

Its subcellular location is the cytoplasm. It catalyses the reaction an N-acyl-L-alpha-aminoacyl-tRNA + H2O = an N-acyl-L-amino acid + a tRNA + H(+). Its function is as follows. Hydrolyzes ribosome-free peptidyl-tRNAs (with 1 or more amino acids incorporated), which drop off the ribosome during protein synthesis, or as a result of ribosome stalling. Functionally, catalyzes the release of premature peptidyl moieties from peptidyl-tRNA molecules trapped in stalled 50S ribosomal subunits, and thus maintains levels of free tRNAs and 50S ribosomes. The polypeptide is Peptidyl-tRNA hydrolase (Salmonella paratyphi B (strain ATCC BAA-1250 / SPB7)).